The following is a 469-amino-acid chain: GDP-fucose protein O-fucosyltransferase 3 (469 aa).

The Cytoplasmic portion of the chain corresponds to 1 to 9 (MVNRIWEKR). Residues 10–30 (FWISCFFIIFLFILVIFQVMV) traverse the membrane as a helical; Signal-anchor for type II membrane protein segment. Over 31 to 469 (ELGRFEKKET…EFWNLVFKFW (439 aa)) the chain is Lumenal. N100, N158, N308, and N333 each carry an N-linked (GlcNAc...) asparagine glycan. C379 and C382 are disulfide-bonded. N455 carries an N-linked (GlcNAc...) asparagine glycan.

Belongs to the glycosyltransferase 10 family.

It localises to the endoplasmic reticulum membrane. The enzyme catalyses L-threonyl-[protein] + GDP-beta-L-fucose = 3-O-(alpha-L-fucosyl)-L-threonyl-[protein] + GDP + H(+). It carries out the reaction L-seryl-[protein] + GDP-beta-L-fucose = 3-O-(alpha-L-fucosyl)-L-seryl-[protein] + GDP + H(+). The protein operates within protein modification; protein glycosylation. Functionally, protein O-fucosyltransferase that specifically catalyzes O-fucosylation of serine or threonine residues in EMI domains of target proteins. Attaches fucose through an O-glycosidic linkage. O-fucosylation of EMI domain-containing proteins may be required for facilitating protein folding and secretion. This Xenopus laevis (African clawed frog) protein is GDP-fucose protein O-fucosyltransferase 3 (fut10).